Reading from the N-terminus, the 138-residue chain is ATP synthase epsilon chain (138 aa).

The protein belongs to the ATPase epsilon chain family. As to quaternary structure, F-type ATPases have 2 components, CF(1) - the catalytic core - and CF(0) - the membrane proton channel. CF(1) has five subunits: alpha(3), beta(3), gamma(1), delta(1), epsilon(1). CF(0) has three main subunits: a, b and c.

It is found in the cell inner membrane. Its function is as follows. Produces ATP from ADP in the presence of a proton gradient across the membrane. In Vesicomyosocius okutanii subsp. Calyptogena okutanii (strain HA), this protein is ATP synthase epsilon chain.